The following is an 89-amino-acid chain: Small ribosomal subunit protein uS15 (89 aa).

It belongs to the universal ribosomal protein uS15 family. Part of the 30S ribosomal subunit. Forms a bridge to the 50S subunit in the 70S ribosome, contacting the 23S rRNA.

Its function is as follows. One of the primary rRNA binding proteins, it binds directly to 16S rRNA where it helps nucleate assembly of the platform of the 30S subunit by binding and bridging several RNA helices of the 16S rRNA. Forms an intersubunit bridge (bridge B4) with the 23S rRNA of the 50S subunit in the ribosome. The sequence is that of Small ribosomal subunit protein uS15 from Geobacillus sp. (strain WCH70).